The chain runs to 257 residues: Global transcriptional regulator CodY (257 aa).

Positions 1 to 155 are GAF domain; sequence MSLLSKTREL…AATVIGMEIL (155 aa). Residues 203-222 constitute a DNA-binding region (H-T-H motif); the sequence is ASKVADRVGITRSVIVNALR.

The protein belongs to the CodY family.

Its subcellular location is the cytoplasm. DNA-binding global transcriptional regulator which is involved in the adaptive response to starvation and acts by directly or indirectly controlling the expression of numerous genes in response to nutrient availability. During rapid exponential growth, CodY is highly active and represses genes whose products allow adaptation to nutrient depletion. The protein is Global transcriptional regulator CodY of Staphylococcus haemolyticus (strain JCSC1435).